We begin with the raw amino-acid sequence, 260 residues long: Nuclear receptor subfamily 0 group B member 2 (260 aa).

In terms of domain architecture, NR LBD spans Ser-16–Arg-260. Position 57 is a symmetric dimethylarginine; by PRMT5 (Arg-57).

It belongs to the nuclear hormone receptor family. NR0 subfamily. As to quaternary structure, heterodimer; efficient DNA binding requires dimerization with another bHLH protein. Interacts (via N-terminus) with NEUROD1 (via N-terminus and C-terminus). Interacts with ID2. Interacts with NR1I3 and EID1. Interacts with RARA, RXRA, THRB, NR5A1, NR5A2, PPARA and PPARG. Interacts with RORG, NFIL3, NR1D1 and BHLHE41. Interacts with HNF4A; the resulting heterodimer is transcriptionally inactive. Interacts with DDX3X; this interaction disrupts the interaction between HNF4 and NR0B2/SHP that forms inactive heterodimers and enhances the formation of active HNF4 homodimers. Post-translationally, arginine methylation by PRMT5 enhances repression activity of metabolic genes in liver in response to bile acid signaling, by increasing interaction with cofactors. Detected in kidney, testis, heart and liver.

Its subcellular location is the cytoplasm. It is found in the nucleus. Its function is as follows. Transcriptional regulator that acts as a negative regulator of receptor-dependent signaling pathways. Specifically inhibits transactivation of the nuclear receptor with which it interacts. Inhibits transcriptional activity of NEUROD1 on E-box-containing promoter by interfering with the coactivation function of the p300/CBP-mediated transcription complex for NEUROD1. Essential component of the liver circadian clock which via its interaction with NR1D1 and RORG regulates NPAS2-mediated hepatic lipid metabolism. Regulates the circadian expression of cytochrome P450 (CYP) enzymes. Represses: NR5A2 and HNF4A to down-regulate CYP2C38, NFLI3 to up-regulate CYP2A5, BHLHE41/HNF1A axis to up-regulate CYP1A2, CYP2E1 and CYP3A11, and NR1D1 to up-regulate CYP2B10, CYP4A10 and CYP4A14. This is Nuclear receptor subfamily 0 group B member 2 (Nr0b2) from Rattus norvegicus (Rat).